The chain runs to 246 residues: Probable transcriptional regulatory protein Dole_0371 (246 aa).

This sequence belongs to the TACO1 family.

The protein resides in the cytoplasm. This is Probable transcriptional regulatory protein Dole_0371 from Desulfosudis oleivorans (strain DSM 6200 / JCM 39069 / Hxd3) (Desulfococcus oleovorans).